A 178-amino-acid polypeptide reads, in one-letter code: Imidazoleglycerol-phosphate dehydratase (178 aa).

Belongs to the imidazoleglycerol-phosphate dehydratase family.

It is found in the cytoplasm. The enzyme catalyses D-erythro-1-(imidazol-4-yl)glycerol 3-phosphate = 3-(imidazol-4-yl)-2-oxopropyl phosphate + H2O. It participates in amino-acid biosynthesis; L-histidine biosynthesis; L-histidine from 5-phospho-alpha-D-ribose 1-diphosphate: step 6/9. This Archaeoglobus fulgidus (strain ATCC 49558 / DSM 4304 / JCM 9628 / NBRC 100126 / VC-16) protein is Imidazoleglycerol-phosphate dehydratase.